A 399-amino-acid chain; its full sequence is MKLADLSSPAFLENPYPLYETLRRQGPFVSIGPNALMTGRYSIVDGLLHNRNMGKSYMESIRVRYGDDALDMPLFQGFNRMFLMLNPPVHTHLRGLVMQAFTGRESESMRPLAIDTAHRLIDDFEQKSSVDLVTEFSFPLPMRIICRMMDVDISDAISLSVAVSNLAKVFDPAPMSPDELVHASAAYEELAHYFTRLIELRRAQHGTDLISMLLRAEEEGQKLTHDEIVSNVILLLLGGYETTSNMIGNALIALHRHPKQLARLKSDLSLMPQAVLECLRYDGSVQFTIRAAMDDVSIEGDVVPRGTIVFLMLGAANRDPAQFTDPDHLEITRKQGRLQSFGAGVHHCLGYRLALVELECALTVLLERLPHLRLANLDTLSWNQRGNLRGVNALIADLH.

Position 348 (Cys348) interacts with heme.

It belongs to the cytochrome P450 family. Heme is required as a cofactor.

This Xylella fastidiosa (strain Temecula1 / ATCC 700964) protein is Putative cytochrome P450 133B2 (cyp133B2).